The chain runs to 339 residues: Outer membrane protein assembly factor BamC (339 aa).

An N-terminal signal peptide occupies residues 1-19 (MKFSRQLVLGSLAVLVLSA). Cys20 carries N-palmitoyl cysteine lipidation. Residue Cys20 is the site of S-diacylglycerol cysteine attachment.

The protein belongs to the BamC family. As to quaternary structure, part of the Bam complex.

The protein resides in the cell outer membrane. Part of the outer membrane protein assembly complex, which is involved in assembly and insertion of beta-barrel proteins into the outer membrane. This chain is Outer membrane protein assembly factor BamC, found in Vibrio cholerae serotype O1 (strain ATCC 39315 / El Tor Inaba N16961).